Here is a 147-residue protein sequence, read N- to C-terminus: Transcription antitermination protein NusB (147 aa).

Belongs to the NusB family.

Its function is as follows. Involved in transcription antitermination. Required for transcription of ribosomal RNA (rRNA) genes. Binds specifically to the boxA antiterminator sequence of the ribosomal RNA (rrn) operons. This chain is Transcription antitermination protein NusB, found in Teredinibacter turnerae (strain ATCC 39867 / T7901).